A 494-amino-acid chain; its full sequence is Metalloprotease TIKI1 (494 aa).

An N-terminal signal peptide occupies residues 1–25 (MTMMTMMMVSWSAFLQICWILMVRA). Residues 26 to 467 (NQFNPGEPSG…QEHERANHDR (442 aa)) lie on the Extracellular side of the membrane. N-linked (GlcNAc...) asparagine glycosylation is found at Asn-234 and Asn-282. Residues 468–488 (TFSGSSSRTGPALSALAVCVQ) form a helical membrane-spanning segment. Residues 489–494 (MLRLLL) are Cytoplasmic-facing.

The protein belongs to the TIKI family. The cofactor is Mn(2+). Co(2+) serves as cofactor.

The protein localises to the cell membrane. Its function is as follows. Metalloprotease that acts as a negative regulator of the Wnt signaling pathway by mediating the cleavage of the N-terminal residues of a subset of Wnt proteins. Following cleavage, Wnt proteins become oxidized and form large disulfide-bond oligomers, leading to their inactivation. In Danio rerio (Zebrafish), this protein is Metalloprotease TIKI1 (trabd2a).